A 310-amino-acid chain; its full sequence is Fe-S cluster assembly protein dre2 (310 aa).

Residues 1 to 130 are N-terminal SAM-like domain; sequence MSGRTLLLSP…KPDIEDMRAV (130 aa). The tract at residues 131–203 is linker; that stretch reads PLRLGRKKHD…EDLLDGSELA (73 aa). [2Fe-2S] cluster contacts are provided by Cys-212, Cys-223, Cys-226, and Cys-228. A fe-S binding site A region spans residues 212–228; sequence CRPKAGRRRRACKDCTC. [4Fe-4S] cluster is bound by residues Cys-273, Cys-276, Cys-284, and Cys-287. 2 short sequence motifs (cx2C motif) span residues 273–276 and 284–287; these read CGNC and CEGC. Residues 273–287 are fe-S binding site B; that stretch reads CGNCSLGDAFRCEGC.

The protein belongs to the anamorsin family. Monomer. Interacts with tah18. Interacts with mia40. [2Fe-2S] cluster serves as cofactor. [4Fe-4S] cluster is required as a cofactor.

Its subcellular location is the cytoplasm. The protein resides in the mitochondrion intermembrane space. Component of the cytosolic iron-sulfur (Fe-S) protein assembly (CIA) machinery required for the maturation of extramitochondrial Fe-S proteins. Part of an electron transfer chain functioning in an early step of cytosolic Fe-S biogenesis, facilitating the de novo assembly of a [4Fe-4S] cluster on the scaffold complex cfd1-nbp35. Electrons are transferred to dre2 from NADPH via the FAD- and FMN-containing protein tah18. Tah18-dre2 are also required for the assembly of the diferric tyrosyl radical cofactor of ribonucleotide reductase (RNR), probably by providing electrons for reduction during radical cofactor maturation in the catalytic small subunit rnr2. In Aspergillus clavatus (strain ATCC 1007 / CBS 513.65 / DSM 816 / NCTC 3887 / NRRL 1 / QM 1276 / 107), this protein is Fe-S cluster assembly protein dre2.